Reading from the N-terminus, the 500-residue chain is MDVFKQSEVWFVIGSQNLYGPKTLQQVMDNAHQVVNSLNSEAGLPVKLVLKPLVTTPDEITALCREANYDTACIGIMTWLHTFSPAKMWIGGLSILNKPLLQFHTQFNAQIPWETMDMDFMNLNQTAHGGREFGFIGARMRQQHSVITGHWQDKEAHQRIGQWMRVAAAKQESQQLKVARFGDNMREVAVTEGDKVAAQIQFGYSVNAYGIGDLVAVVDAVSKGDIDTLVEEYEATYRFSDAVKLNGDKRENLLDAARIELGMKRFLEQGGFKAFTTNFENLYGLKQLPGLAVQRLMQQGYGFGGEGDWKTAALLRILKVMGTGLKGGTSFMEDYTYNFQPGNDLVVGSHMLEVCPSIAKEEKPLLDVQHLGIGGKADPARLIFSTPAGPALNASLIDMGNRFRLLVNVVDTVEQPHPLPKLPVARAIWQAQPSLATAAEAWIIAGGAHHTVFSQAVGVDELRLYAEMHGIEFLLIDNDTTLPAFKNEIRWNEVYYQLNR.

4 residues coordinate Mn(2+): glutamate 306, glutamate 333, histidine 350, and histidine 450.

Belongs to the arabinose isomerase family. In terms of assembly, homohexamer. Requires Mn(2+) as cofactor.

It catalyses the reaction beta-L-arabinopyranose = L-ribulose. The protein operates within carbohydrate degradation; L-arabinose degradation via L-ribulose; D-xylulose 5-phosphate from L-arabinose (bacterial route): step 1/3. Functionally, catalyzes the conversion of L-arabinose to L-ribulose. This is L-arabinose isomerase from Yersinia pseudotuberculosis serotype O:3 (strain YPIII).